We begin with the raw amino-acid sequence, 296 residues long: Probable porphobilinogen deaminase (296 aa).

S-(dipyrrolylmethanemethyl)cysteine is present on Cys241.

The protein belongs to the HMBS family. Dipyrromethane serves as cofactor.

The enzyme catalyses 4 porphobilinogen + H2O = hydroxymethylbilane + 4 NH4(+). Its pathway is porphyrin-containing compound metabolism; protoporphyrin-IX biosynthesis; coproporphyrinogen-III from 5-aminolevulinate: step 2/4. Functionally, tetrapolymerization of the monopyrrole PBG into the hydroxymethylbilane pre-uroporphyrinogen in several discrete steps. The protein is Probable porphobilinogen deaminase of Pyrobaculum neutrophilum (strain DSM 2338 / JCM 9278 / NBRC 100436 / V24Sta) (Thermoproteus neutrophilus).